Reading from the N-terminus, the 64-residue chain is Metallothionein (64 aa).

This sequence belongs to the metallothionein superfamily. Type 4 family.

Its function is as follows. Metallothioneins have a high content of cysteine residues that bind various heavy metals. The polypeptide is Metallothionein (Sterechinus neumayeri (Antarctic sea urchin)).